A 407-amino-acid polypeptide reads, in one-letter code: 4-hydroxybenzoate polyprenyltransferase, mitochondrial (407 aa).

The N-terminal 20 residues, 1–20 (MAFFGLSRVSRRLLKSSVSV), are a transit peptide targeting the mitochondrion. Transmembrane regions (helical) follow at residues 137 to 157 (IGTW…ADPG), 162 to 182 (FKYM…GCTI), 210 to 230 (FQGI…LLQL), 254 to 274 (FTFW…LLGW), 279 to 299 (GSIA…WTLV), and 330 to 350 (LWLT…GFSA).

Belongs to the UbiA prenyltransferase family. Mg(2+) serves as cofactor. As to expression, expressed in flowers.

It localises to the mitochondrion inner membrane. The enzyme catalyses an all-trans-polyprenyl diphosphate + 4-hydroxybenzoate = a 4-hydroxy-3-(all-trans-polyprenyl)benzoate + diphosphate. Its pathway is cofactor biosynthesis; ubiquinone biosynthesis. Catalyzes the prenylation of para-hydroxybenzoate (PHB) with an all-trans polyprenyl group. Mediates the second step in the final reaction sequence of coenzyme Q (CoQ) biosynthesis, which is the condensation of the polyisoprenoid side chain with PHB, generating the first membrane-bound Q intermediate. Required for embryo development. The polypeptide is 4-hydroxybenzoate polyprenyltransferase, mitochondrial (Arabidopsis thaliana (Mouse-ear cress)).